The primary structure comprises 274 residues: NAD kinase (274 aa).

D50 serves as the catalytic Proton acceptor. Residues 50–51 (DG), 126–127 (NE), R152, D154, 165–170 (TAYNKS), and A189 each bind NAD(+).

It belongs to the NAD kinase family. A divalent metal cation is required as a cofactor.

It is found in the cytoplasm. The catalysed reaction is NAD(+) + ATP = ADP + NADP(+) + H(+). Involved in the regulation of the intracellular balance of NAD and NADP, and is a key enzyme in the biosynthesis of NADP. Catalyzes specifically the phosphorylation on 2'-hydroxyl of the adenosine moiety of NAD to yield NADP. The chain is NAD kinase from Streptococcus gordonii (strain Challis / ATCC 35105 / BCRC 15272 / CH1 / DL1 / V288).